The following is a 379-amino-acid chain: Putative F-box protein At5g62660 (379 aa).

The F-box domain maps to 35–84 (ALVAPEIPLDLLIEILTKLPAKSLMRFKCVSKLWSSLIRSRFFSNCYLTV).

This Arabidopsis thaliana (Mouse-ear cress) protein is Putative F-box protein At5g62660.